The chain runs to 271 residues: Hydroxyethylthiazole kinase (271 aa).

Methionine 50 provides a ligand contact to substrate. Residues arginine 126 and threonine 172 each contribute to the ATP site. Residue glycine 199 coordinates substrate.

This sequence belongs to the Thz kinase family. Mg(2+) is required as a cofactor.

The enzyme catalyses 5-(2-hydroxyethyl)-4-methylthiazole + ATP = 4-methyl-5-(2-phosphooxyethyl)-thiazole + ADP + H(+). It functions in the pathway cofactor biosynthesis; thiamine diphosphate biosynthesis; 4-methyl-5-(2-phosphoethyl)-thiazole from 5-(2-hydroxyethyl)-4-methylthiazole: step 1/1. Catalyzes the phosphorylation of the hydroxyl group of 4-methyl-5-beta-hydroxyethylthiazole (THZ). The chain is Hydroxyethylthiazole kinase from Akkermansia muciniphila (strain ATCC BAA-835 / DSM 22959 / JCM 33894 / BCRC 81048 / CCUG 64013 / CIP 107961 / Muc).